The chain runs to 618 residues: Putative UDP-glucuronate:xylan alpha-glucuronosyltransferase 3 (618 aa).

A helical; Signal-anchor for type II membrane protein membrane pass occupies residues 32-54; it reads GVKFNTLKLVLICIMLGALFTIY. Mn(2+)-binding residues include D379 and D381. Substrate contacts are provided by residues 379–381, 408–410, 435–439, and 489–495; these read DAD, NSG, NGGDQ, and HYLGYNK. H489 contacts Mn(2+). Residues 598–608 show a composition bias toward low complexity; sequence TNNSSTTTTSS. A disordered region spans residues 598–618; that stretch reads TNNSSTTTTSSPPHKTALPSL.

It belongs to the glycosyltransferase 8 family. Glycogenin subfamily. The cofactor is Mn(2+).

The protein localises to the golgi apparatus membrane. Functionally, may be involved in the substitutions of the xylan backbone in stem glucuronoxylan. In Arabidopsis thaliana (Mouse-ear cress), this protein is Putative UDP-glucuronate:xylan alpha-glucuronosyltransferase 3 (GUX3).